The following is a 129-amino-acid chain: Small ribosomal subunit protein uS11 (129 aa).

This sequence belongs to the universal ribosomal protein uS11 family. As to quaternary structure, part of the 30S ribosomal subunit. Interacts with proteins S7 and S18. Binds to IF-3.

In terms of biological role, located on the platform of the 30S subunit, it bridges several disparate RNA helices of the 16S rRNA. Forms part of the Shine-Dalgarno cleft in the 70S ribosome. In Histophilus somni (strain 129Pt) (Haemophilus somnus), this protein is Small ribosomal subunit protein uS11.